Consider the following 529-residue polypeptide: 2-(3-amino-3-carboxypropyl)histidine synthase subunit 2-2 (529 aa).

The [4Fe-4S] cluster site is built by Cys130, Cys151, and Cys366.

The protein belongs to the DPH1/DPH2 family. DPH2 subfamily. As to quaternary structure, component of the 2-(3-amino-3-carboxypropyl)histidine synthase complex composed of DPH1, DPH2, DPH3 and a NADH-dependent reductase, predominantly CBR1. [4Fe-4S] cluster is required as a cofactor.

The protein resides in the cytoplasm. It participates in protein modification; peptidyl-diphthamide biosynthesis. Its function is as follows. Required for the first step of diphthamide biosynthesis, a post-translational modification of histidine which occurs in elongation factor 2. DPH1 and DPH2 transfer a 3-amino-3-carboxypropyl (ACP) group from S-adenosyl-L-methionine (SAM) to a histidine residue, the reaction is assisted by a reduction system comprising DPH3 and a NADH-dependent reductase, predominantly CBR1. Facilitates the reduction of the catalytic iron-sulfur cluster found in the DPH1 subunit. The sequence is that of 2-(3-amino-3-carboxypropyl)histidine synthase subunit 2-2 from Candida albicans (strain SC5314 / ATCC MYA-2876) (Yeast).